The following is a 431-amino-acid chain: Enolase (431 aa).

Gln166 lines the (2R)-2-phosphoglycerate pocket. Glu208 acts as the Proton donor in catalysis. Residues Asp245, Glu288, and Asp315 each contribute to the Mg(2+) site. (2R)-2-phosphoglycerate-binding residues include Lys340, Arg369, Ser370, and Lys391. The active-site Proton acceptor is the Lys340.

It belongs to the enolase family. The cofactor is Mg(2+).

It localises to the cytoplasm. The protein resides in the secreted. The protein localises to the cell surface. It catalyses the reaction (2R)-2-phosphoglycerate = phosphoenolpyruvate + H2O. It functions in the pathway carbohydrate degradation; glycolysis; pyruvate from D-glyceraldehyde 3-phosphate: step 4/5. Its function is as follows. Catalyzes the reversible conversion of 2-phosphoglycerate (2-PG) into phosphoenolpyruvate (PEP). It is essential for the degradation of carbohydrates via glycolysis. The sequence is that of Enolase from Clostridium botulinum (strain 657 / Type Ba4).